Consider the following 558-residue polypeptide: DEAD-box ATP-dependent RNA helicase 49 (558 aa).

The short motif at 16–44 (FSELKPPLSEDIIEALDRSGFEVCTPVQA) is the Q motif element. Positions 47 to 226 (IPFLCSHKDV…KAGLRNAMEV (180 aa)) constitute a Helicase ATP-binding domain. Residue 60-67 (AATGSGKT) participates in ATP binding. The DEAD box signature appears at 174–177 (DEAD). One can recognise a Helicase C-terminal domain in the interval 255 to 402 (QLVHLLIENK…ERKCSENASD (148 aa)). Residues 506–558 (KDKLQQEKRGKRKKSSKEAVDDSNKASRKRKLTGRQRQTIQTAQDEEEMNLRL) are disordered. The span at 521–530 (SKEAVDDSNK) shows a compositional bias: basic and acidic residues. The span at 549-558 (QDEEEMNLRL) shows a compositional bias: acidic residues.

Belongs to the DEAD box helicase family. DDX55/SPB4 subfamily.

The catalysed reaction is ATP + H2O = ADP + phosphate + H(+). This chain is DEAD-box ATP-dependent RNA helicase 49 (RH49), found in Arabidopsis thaliana (Mouse-ear cress).